We begin with the raw amino-acid sequence, 594 residues long: Arginine--tRNA ligase (594 aa).

The 'HIGH' region motif lies at 139-149 (ANPTGPLHVGH).

It belongs to the class-I aminoacyl-tRNA synthetase family. In terms of assembly, monomer.

It localises to the cytoplasm. The enzyme catalyses tRNA(Arg) + L-arginine + ATP = L-arginyl-tRNA(Arg) + AMP + diphosphate. This Burkholderia mallei (strain NCTC 10247) protein is Arginine--tRNA ligase.